Here is a 61-residue protein sequence, read N- to C-terminus: uncharacterized protein (61 aa).

Residues 1-40 (MRRGGEPQCDGREFRIASSPAREREDDNETAPPQTSAAQE) form a disordered region. Residues 9–25 (CDGREFRIASSPARERE) show a composition bias toward basic and acidic residues.

This is an uncharacterized protein from Caenorhabditis elegans.